Reading from the N-terminus, the 240-residue chain is NADPH-flavin oxidoreductase (240 aa).

Residues 11–15, S39, 67–69, 128–131, and 167–169 contribute to the FMN site; these read HRSIR, QAY, YIGG, and KPR.

This sequence belongs to the flavin oxidoreductase frp family. As to quaternary structure, homodimer.

It carries out the reaction FMNH2 + NADP(+) = FMN + NADPH + 2 H(+). Catalyzes the NADPH-dependent reduction of FMN to FMNH(2). Involved in bioluminescence by providing FMNH(2) to luciferase. This Vibrio harveyi (Beneckea harveyi) protein is NADPH-flavin oxidoreductase.